Here is an 856-residue protein sequence, read N- to C-terminus: DNA mismatch repair protein MutS (856 aa).

615-622 (GPNMGGKS) provides a ligand contact to ATP. Residues 798–807 (ETTGHQQAIK) are compositionally biased toward polar residues. Residues 798–817 (ETTGHQQAIKNPSKAPREEQ) form a disordered region.

The protein belongs to the DNA mismatch repair MutS family.

Functionally, this protein is involved in the repair of mismatches in DNA. It is possible that it carries out the mismatch recognition step. This protein has a weak ATPase activity. This Photobacterium profundum (strain SS9) protein is DNA mismatch repair protein MutS.